A 123-amino-acid chain; its full sequence is cAMP-responsive element-binding protein-like 2 (123 aa).

The segment at 1 to 24 (MDDSKVVGGKVKKPGKRGRKPAKI) is disordered. The span at 10-21 (KVKKPGKRGRKP) shows a compositional bias: basic residues. The 64-residue stretch at 23–86 (KIDLKAKLER…MAMDQGKIPS (64 aa)) folds into the bZIP domain. Residues 29–60 (KLERSRQSARECRARKKLRYQYLEELVSSRER) are basic motif. A leucine-zipper region spans residues 62-69 (ICALREEL). The disordered stretch occupies residues 92-123 (LTGEEQSKPQQNSSRHPKAGKTDANTNSLVGN). Positions 114-123 (DANTNSLVGN) are enriched in polar residues.

It belongs to the bZIP family. ATF subfamily. Interacts with CREB1; regulates CREB1 phosphorylation, stability and transcriptional activity. In terms of processing, phosphorylated by AMPK. Widely expressed with higher expression in adipose tissue, skeletal muscle, and liver (at protein level).

Its subcellular location is the nucleus. In terms of biological role, probable regulator of CREB1 transcriptional activity which is involved in adipose cells differentiation. May also play a regulatory role in the cell cycle. This is cAMP-responsive element-binding protein-like 2 (Crebl2) from Mus musculus (Mouse).